A 157-amino-acid polypeptide reads, in one-letter code: Putative pre-16S rRNA nuclease (157 aa).

The protein belongs to the YqgF nuclease family.

The protein resides in the cytoplasm. In terms of biological role, could be a nuclease involved in processing of the 5'-end of pre-16S rRNA. In Ruegeria sp. (strain TM1040) (Silicibacter sp.), this protein is Putative pre-16S rRNA nuclease.